The chain runs to 226 residues: uncharacterized protein (226 aa).

A run of 4 helical transmembrane segments spans residues 25 to 45 (ALAW…IFLI), 54 to 74 (FLLF…YFIF), 107 to 127 (ELFL…YFFI), and 153 to 173 (TITI…CFSS).

The protein resides in the cell membrane. This is an uncharacterized protein from Mycoplasma genitalium (strain ATCC 33530 / DSM 19775 / NCTC 10195 / G37) (Mycoplasmoides genitalium).